A 431-amino-acid chain; its full sequence is uncharacterized protein (431 aa).

2 4Fe-4S ferredoxin-type domains span residues 336 to 367 (VRPV…NGLD) and 362 to 391 (IDNG…MDTG).

This is an uncharacterized protein from Methanothermobacter thermautotrophicus (strain ATCC 29096 / DSM 1053 / JCM 10044 / NBRC 100330 / Delta H) (Methanobacterium thermoautotrophicum).